Consider the following 1002-residue polypeptide: BTB/POZ domain-containing protein At1g04390 (1002 aa).

BTB domains lie at 680–758 (SDMR…EVES) and 808–889 (SDVI…PKPP).

The protein operates within protein modification; protein ubiquitination. In terms of biological role, may act as a substrate-specific adapter of an E3 ubiquitin-protein ligase complex (CUL3-RBX1-BTB) which mediates the ubiquitination and subsequent proteasomal degradation of target proteins. The protein is BTB/POZ domain-containing protein At1g04390 of Arabidopsis thaliana (Mouse-ear cress).